A 3336-amino-acid chain; its full sequence is Pericentrin (3336 aa).

Disordered stretches follow at residues 1–71 (MEVE…DICK) and 81–100 (GAGG…KRED). Basic and acidic residues predominate over residues 27-37 (TKGDSSHSEKK). Ser-44 is modified (phosphoserine). The residue at position 188 (Ser-188) is a Phosphoserine. The residue at position 191 (Thr-191) is a Phosphothreonine. Positions 258-553 (HTAQLELTQA…RLQGAREDAL (296 aa)) form a coiled coil. Residues 569–589 (KPEKGRKDHVDELEPERHKES) form a disordered region. Residues Ser-610 and Ser-682 each carry the phosphoserine modification. Coiled coils occupy residues 675–835 (TEHK…DALH) and 1010–1146 (TILT…MLKA). Ser-1245 is subject to Phosphoserine. Residues 1299 to 1949 (NEETAQVVRK…FLRCQVELDR (651 aa)) are a coiled coil. The interval 1619 to 1638 (TLDAGRCPEPPSGSPPEGPE) is disordered. Positions 1626-1636 (PEPPSGSPPEG) are enriched in pro residues. 2 positions are modified to phosphoserine: Ser-1653 and Ser-1712. The interval 1954 to 1974 (RATAHTRVPGAHPQPRMDGGA) is disordered. Ser-2044 carries the phosphoserine modification. Residues 2064–2082 (VDLVAQVKQLQEKLNRLLY) are a coiled coil. The disordered stretch occupies residues 2168–2214 (SLIPDEMPDSPIQEKSECQDMSLSSPTSVLGGSRHQSHTAEAGPRKS). Ser-2177, Ser-2192, Ser-2225, Ser-2226, and Ser-2327 each carry phosphoserine. The span at 2186–2197 (QDMSLSSPTSVL) shows a compositional bias: polar residues. A disordered region spans residues 2318–2374 (SFDSQETLSSPPPGLEGKADRSEKSDGSGFGARLSPGSGGPEAQTAGPVTPASISGR). Positions 2334-2343 (GKADRSEKSD) are enriched in basic and acidic residues. 4 positions are modified to phosphoserine: Ser-2352, Ser-2355, Ser-2477, and Ser-2486. Residues 2536–3086 (QEKLQHLRTA…EKLLKHHLQK (551 aa)) are a coiled coil. Disordered stretches follow at residues 2875–2910 (LEQS…WRKW) and 3084–3126 (LQKG…EEAH). Composition is skewed to basic and acidic residues over residues 2876–2896 (EQSH…RSAE) and 3092–3102 (RSERSAWKPDE). The tract at residues 2983 to 3246 (LSAARLLTSF…ARQPQSPPRT (264 aa)) is interaction with NEK2. The calmodulin-binding stretch occupies residues 3195–3208 (RFRTAVRVVIAILR). The tract at residues 3224-3300 (ALAQGKAPRP…RSLTASQDPE (77 aa)) is disordered. A compositionally biased stretch (low complexity) spans 3226-3240 (AQGKAPRPGPRARQP). Positions 3283 to 3297 (PSPNSRLERSLTASQ) are enriched in polar residues. Ser-3302 is modified (phosphoserine).

In terms of assembly, interacts with CHD3. Interacts with CHD4; the interaction regulates centrosome integrity. Interacts with DISC1 and PCM1. Binds calmodulin. Interacts with CDK5RAP2; the interaction is leading to centrosomal localization of PCNT and CDK5RAP2. Interacts with isoform 1 of NEK2. Interacts with CEP131. Interacts with CCDC13. Interacts with CEP68. Interacts with ATF5; the ATF5:PCNT:polyglutamylated tubulin (PGT) tripartite unites the mother centriole and the pericentriolar material (PCM) in the centrosome. Post-translationally, cleaved during mitotis which leads to removal of CDK5RAP2 from the centrosome and promotes centriole disengagement and subsequent centriole separation. The C-terminal fragment is rapidly degraded following cleavage. Ubiquitinated by TRIM43; leading to proteasomal degradation. As to expression, expressed in all tissues tested, including placenta, liver, kidney and thymus.

The protein resides in the cytoplasm. The protein localises to the cytoskeleton. It localises to the microtubule organizing center. Its subcellular location is the centrosome. Its function is as follows. Integral component of the filamentous matrix of the centrosome involved in the initial establishment of organized microtubule arrays in both mitosis and meiosis. Plays a role, together with DISC1, in the microtubule network formation. Is an integral component of the pericentriolar material (PCM). May play an important role in preventing premature centrosome splitting during interphase by inhibiting NEK2 kinase activity at the centrosome. The protein is Pericentrin (PCNT) of Homo sapiens (Human).